Here is a 102-residue protein sequence, read N- to C-terminus: Large ribosomal subunit protein bL21 (102 aa).

It belongs to the bacterial ribosomal protein bL21 family. Part of the 50S ribosomal subunit. Contacts protein L20.

In terms of biological role, this protein binds to 23S rRNA in the presence of protein L20. This chain is Large ribosomal subunit protein bL21, found in Arthrobacter sp. (strain FB24).